The following is a 121-amino-acid chain: N-alpha-acetyltransferase 38, NatC auxiliary subunit (121 aa).

A Sm domain is found at 40–113 (PGRRKLQKWL…IVSLSIDEPD (74 aa)).

This sequence belongs to the snRNP Sm proteins family. Component of the N-terminal acetyltransferase C (NatC) complex, which is composed of Naa35, Sbat/Naa38 and Naa30A. Interacts with Smn and Hez; along with Hez and Vlet, may form an accessory subcomplex involved in SMN complex function.

The protein localises to the cytoplasm. It is found in the nucleus. Auxiliary component of the N-terminal acetyltransferase C (NatC) complex which catalyzes acetylation of N-terminal methionine residues. May have an accessory function in the survival motor neuron (SMN) complex. The polypeptide is N-alpha-acetyltransferase 38, NatC auxiliary subunit (Drosophila melanogaster (Fruit fly)).